Here is a 304-residue protein sequence, read N- to C-terminus: Beta-lactamase AER-1 (304 aa).

Residues 1 to 37 (MYVLSVEKPTLRNKFAAGIGVVLVCVVASFIPTPVFA) form the signal peptide. The Acyl-ester intermediate role is filled by serine 83. Cysteines 90 and 137 form a disulfide. Positions 173–195 (ETQLDRKEPELNEGTPGDVRDTT) are disordered. Residue 248–250 (KTG) coordinates substrate.

The protein belongs to the class-A beta-lactamase family.

The catalysed reaction is a beta-lactam + H2O = a substituted beta-amino acid. Its function is as follows. Hydrolyzes carbenicillin. Methicillin and oxacillin are weakly hydrolyzed. The sequence is that of Beta-lactamase AER-1 (aer1) from Aeromonas hydrophila.